A 42-amino-acid polypeptide reads, in one-letter code: Pollen allergen Sal k 1 (42 aa).

This Kali turgidum (Prickly saltwort) protein is Pollen allergen Sal k 1.